A 346-amino-acid polypeptide reads, in one-letter code: Phenylalanine--tRNA ligase alpha subunit (346 aa).

E261 contacts Mg(2+).

This sequence belongs to the class-II aminoacyl-tRNA synthetase family. Phe-tRNA synthetase alpha subunit type 1 subfamily. Tetramer of two alpha and two beta subunits. Mg(2+) is required as a cofactor.

The protein localises to the cytoplasm. It carries out the reaction tRNA(Phe) + L-phenylalanine + ATP = L-phenylalanyl-tRNA(Phe) + AMP + diphosphate + H(+). The protein is Phenylalanine--tRNA ligase alpha subunit of Streptococcus agalactiae serotype Ia (strain ATCC 27591 / A909 / CDC SS700).